The sequence spans 294 residues: Elongation factor Ts (294 aa).

An involved in Mg(2+) ion dislocation from EF-Tu region spans residues 82–85; the sequence is TDFV.

Belongs to the EF-Ts family.

The protein resides in the cytoplasm. Functionally, associates with the EF-Tu.GDP complex and induces the exchange of GDP to GTP. It remains bound to the aminoacyl-tRNA.EF-Tu.GTP complex up to the GTP hydrolysis stage on the ribosome. This Nitrosomonas eutropha (strain DSM 101675 / C91 / Nm57) protein is Elongation factor Ts.